The following is a 376-amino-acid chain: Putative type I restriction enzyme MpnIIP endonuclease subunit N-terminal part (376 aa).

In terms of biological role, the N-terminal section of a putative type I restriction enzyme that if reconstituted might recognize 5'-GAN(7)TAY-3' and cleave a random distance away. Subunit R is required for both nuclease and ATPase activities, but not for modification. The chain is Putative type I restriction enzyme MpnIIP endonuclease subunit N-terminal part from Mycoplasma pneumoniae (strain ATCC 29342 / M129 / Subtype 1) (Mycoplasmoides pneumoniae).